A 151-amino-acid chain; its full sequence is D-aminoacyl-tRNA deacylase (151 aa).

Residues 137–138 carry the Gly-cisPro motif, important for rejection of L-amino acids motif; the sequence is GP.

Belongs to the DTD family. In terms of assembly, homodimer.

The protein resides in the cytoplasm. It carries out the reaction glycyl-tRNA(Ala) + H2O = tRNA(Ala) + glycine + H(+). The catalysed reaction is a D-aminoacyl-tRNA + H2O = a tRNA + a D-alpha-amino acid + H(+). In terms of biological role, an aminoacyl-tRNA editing enzyme that deacylates mischarged D-aminoacyl-tRNAs. Also deacylates mischarged glycyl-tRNA(Ala), protecting cells against glycine mischarging by AlaRS. Acts via tRNA-based rather than protein-based catalysis; rejects L-amino acids rather than detecting D-amino acids in the active site. By recycling D-aminoacyl-tRNA to D-amino acids and free tRNA molecules, this enzyme counteracts the toxicity associated with the formation of D-aminoacyl-tRNA entities in vivo and helps enforce protein L-homochirality. This chain is D-aminoacyl-tRNA deacylase, found in Fusobacterium nucleatum subsp. nucleatum (strain ATCC 25586 / DSM 15643 / BCRC 10681 / CIP 101130 / JCM 8532 / KCTC 2640 / LMG 13131 / VPI 4355).